We begin with the raw amino-acid sequence, 385 residues long: ATP phosphoribosyltransferase regulatory subunit (385 aa).

The protein belongs to the class-II aminoacyl-tRNA synthetase family. HisZ subfamily. Heteromultimer composed of HisG and HisZ subunits.

It is found in the cytoplasm. The protein operates within amino-acid biosynthesis; L-histidine biosynthesis; L-histidine from 5-phospho-alpha-D-ribose 1-diphosphate: step 1/9. Its function is as follows. Required for the first step of histidine biosynthesis. May allow the feedback regulation of ATP phosphoribosyltransferase activity by histidine. The chain is ATP phosphoribosyltransferase regulatory subunit from Lysinibacillus sphaericus (strain C3-41).